We begin with the raw amino-acid sequence, 297 residues long: Cyclin-dependent kinase 1 (297 aa).

Positions 4–293 (YQKVEKIGEG…AKRALQQNYL (290 aa)) constitute a Protein kinase domain. Residues 10–18 (IGEGTYGVV) and Lys33 contribute to the ATP site. The residue at position 14 (Thr14) is a Phosphothreonine. Tyr15 carries the phosphotyrosine modification. Residue Asp134 is the Proton acceptor of the active site. Residue Thr167 is modified to Phosphothreonine.

Belongs to the protein kinase superfamily. CMGC Ser/Thr protein kinase family. CDC2/CDKX subfamily. In terms of assembly, forms a stable but non-covalent complex with regulatory subunit suc1 and with a cyclin. Interacts with cyclin cdc13. Interacts with cyclin cig2. Interacts with cdc37.

The protein resides in the cytoplasm. It catalyses the reaction L-seryl-[protein] + ATP = O-phospho-L-seryl-[protein] + ADP + H(+). The catalysed reaction is L-threonyl-[protein] + ATP = O-phospho-L-threonyl-[protein] + ADP + H(+). With respect to regulation, phosphorylation at Thr-14 or Tyr-15 inactivates the enzyme, while phosphorylation at Thr-167 activates it. In terms of biological role, cyclin-dependent kinase that acts as a master regulator of the mitotic and meiotic cell cycles. Required to drive the G1-S and G2-M transitions, and initiation of premeiotic DNA replication and meiosis II. More than 200 substrates have been identified. Substrate specificity is in part regulated by the bound cyclin protein. When complexed with cyclin cig2, it drives the G1-S phase transition. When complexed with cyclin cdc13, it drives the G2-M transition and initiation of meiosis II. Its activity rises throughout the cell cycle and substrate specificity is further influenced by activity thresholds with more sensitive substrates phosphorylated earlier in the cell cycle than less sensitive substrates. Phosphorylates dis1 during metaphase to ensure proper microtubule dynamics and accurate chromosome segregation. Phosphorylates the repetitive C-terminus of the large subunit of RNA polymerase II rpb1. Inactivated by checkpoint signaling following detection of cellular damage, leading to cell cycle arrest to allow damage repair. Inactivated during G2 DNA damage checkpoint signaling. Inactivated in response to defective RNA splicing. In Schizosaccharomyces pombe (strain 972 / ATCC 24843) (Fission yeast), this protein is Cyclin-dependent kinase 1.